Here is a 357-residue protein sequence, read N- to C-terminus: Chorismate synthase (357 aa).

The span at 38-49 (EKDIQPDLDRRK) shows a compositional bias: basic and acidic residues. The tract at residues 38-60 (EKDIQPDLDRRKPGTSRYTTPRR) is disordered. Residues arginine 48 and arginine 54 each coordinate NADP(+). Residues 125–127 (RSS), 243–244 (NA), glycine 283, 298–302 (KPTSS), and arginine 324 contribute to the FMN site.

Belongs to the chorismate synthase family. As to quaternary structure, homotetramer. FMNH2 serves as cofactor.

The catalysed reaction is 5-O-(1-carboxyvinyl)-3-phosphoshikimate = chorismate + phosphate. Its pathway is metabolic intermediate biosynthesis; chorismate biosynthesis; chorismate from D-erythrose 4-phosphate and phosphoenolpyruvate: step 7/7. Its function is as follows. Catalyzes the anti-1,4-elimination of the C-3 phosphate and the C-6 proR hydrogen from 5-enolpyruvylshikimate-3-phosphate (EPSP) to yield chorismate, which is the branch point compound that serves as the starting substrate for the three terminal pathways of aromatic amino acid biosynthesis. This reaction introduces a second double bond into the aromatic ring system. The sequence is that of Chorismate synthase from Haemophilus influenzae (strain PittEE).